The following is a 245-amino-acid chain: 1-(5-phosphoribosyl)-5-[(5-phosphoribosylamino)methylideneamino] imidazole-4-carboxamide isomerase (245 aa).

Asp-7 serves as the catalytic Proton acceptor. Residue Asp-129 is the Proton donor of the active site.

This sequence belongs to the HisA/HisF family.

The protein localises to the cytoplasm. It catalyses the reaction 1-(5-phospho-beta-D-ribosyl)-5-[(5-phospho-beta-D-ribosylamino)methylideneamino]imidazole-4-carboxamide = 5-[(5-phospho-1-deoxy-D-ribulos-1-ylimino)methylamino]-1-(5-phospho-beta-D-ribosyl)imidazole-4-carboxamide. It functions in the pathway amino-acid biosynthesis; L-histidine biosynthesis; L-histidine from 5-phospho-alpha-D-ribose 1-diphosphate: step 4/9. The polypeptide is 1-(5-phosphoribosyl)-5-[(5-phosphoribosylamino)methylideneamino] imidazole-4-carboxamide isomerase (Shewanella pealeana (strain ATCC 700345 / ANG-SQ1)).